We begin with the raw amino-acid sequence, 451 residues long: Bifunctional protein GlmU (451 aa).

Residues 1 to 231 form a pyrophosphorylase region; it reads MDSPLAIIVL…ADEVAGINSR (231 aa). UDP-N-acetyl-alpha-D-glucosamine is bound by residues 10–13, Lys-24, Gln-74, 79–80, 102–104, Gly-142, Glu-156, Asn-171, and Asn-229; these read LAAG, GT, and YGD. Asp-104 serves as a coordination point for Mg(2+). Asn-229 is a binding site for Mg(2+). Residues 232 to 252 are linker; it reads GELAEAEGRWQQRRRAAAMAD. The segment at 253 to 451 is N-acetyltransferase; the sequence is GASLIAPETV…MKKKKAEKKS (199 aa). Residues Arg-318 and Lys-336 each coordinate UDP-N-acetyl-alpha-D-glucosamine. The Proton acceptor role is filled by His-348. 2 residues coordinate UDP-N-acetyl-alpha-D-glucosamine: Tyr-351 and Asn-362. Acetyl-CoA contacts are provided by residues Ala-365, 371-372, Ser-390, Ala-408, and Arg-425; that span reads NY.

This sequence in the N-terminal section; belongs to the N-acetylglucosamine-1-phosphate uridyltransferase family. In the C-terminal section; belongs to the transferase hexapeptide repeat family. As to quaternary structure, homotrimer. The cofactor is Mg(2+).

Its subcellular location is the cytoplasm. It carries out the reaction alpha-D-glucosamine 1-phosphate + acetyl-CoA = N-acetyl-alpha-D-glucosamine 1-phosphate + CoA + H(+). The catalysed reaction is N-acetyl-alpha-D-glucosamine 1-phosphate + UTP + H(+) = UDP-N-acetyl-alpha-D-glucosamine + diphosphate. It participates in nucleotide-sugar biosynthesis; UDP-N-acetyl-alpha-D-glucosamine biosynthesis; N-acetyl-alpha-D-glucosamine 1-phosphate from alpha-D-glucosamine 6-phosphate (route II): step 2/2. The protein operates within nucleotide-sugar biosynthesis; UDP-N-acetyl-alpha-D-glucosamine biosynthesis; UDP-N-acetyl-alpha-D-glucosamine from N-acetyl-alpha-D-glucosamine 1-phosphate: step 1/1. Its pathway is bacterial outer membrane biogenesis; LPS lipid A biosynthesis. Catalyzes the last two sequential reactions in the de novo biosynthetic pathway for UDP-N-acetylglucosamine (UDP-GlcNAc). The C-terminal domain catalyzes the transfer of acetyl group from acetyl coenzyme A to glucosamine-1-phosphate (GlcN-1-P) to produce N-acetylglucosamine-1-phosphate (GlcNAc-1-P), which is converted into UDP-GlcNAc by the transfer of uridine 5-monophosphate (from uridine 5-triphosphate), a reaction catalyzed by the N-terminal domain. In Novosphingobium aromaticivorans (strain ATCC 700278 / DSM 12444 / CCUG 56034 / CIP 105152 / NBRC 16084 / F199), this protein is Bifunctional protein GlmU.